A 278-amino-acid chain; its full sequence is Gamma carbonic anhydrase 2, mitochondrial (278 aa).

The transit peptide at 1 to 43 directs the protein to the mitochondrion; the sequence is MGTLGRAIYTVGNWIRGTGQALDRVGSLLQGSHRIEEHLSRHR. Substrate-binding positions include 86 to 88 and 101 to 102; these read RGD and QD. Zn(2+)-binding residues include His107, His130, and His135. Asn209 contributes to the substrate binding site.

This sequence belongs to the gamma-class carbonic anhydrase family. In terms of assembly, homotrimer. Component of the mitochondrial oxidoreductase respiratory chain complex I; element of the extra matrix-exposed domain, which is attached to the membrane arm of this complex. Interacts with GAMMACAL1 and GAMMACAL2. It depends on Zn(2+) as a cofactor. Constitutively expressed in roots and leaves, with higher levels in flowers, particularly in tapetal tissue of anthers, inflorescence (IM) and floral meristems (FM).

Its subcellular location is the mitochondrion membrane. Functionally, enzyme involved in the catabolism of H(2)CO(3) but that does not mediates the reversible hydration of carbon dioxide. Mediates complex I assembly in mitochondria and respiration. Binds HCO(3)-. Required for male fertility during anther development and dehiscence to regulate the secondary thickenings of the endothecial cell wall, probably by modulating H(2)O(2)-dependent lignin polymerization. The sequence is that of Gamma carbonic anhydrase 2, mitochondrial (GAMMACA2) from Arabidopsis thaliana (Mouse-ear cress).